We begin with the raw amino-acid sequence, 464 residues long: MKSTVEQLSPTRVRINVEVPFAELEPDFQRAYKELAKQVRLPGFRPGKAPAKLLEARFGREAMLDQVVTEALPARYGQAVAESEVHPLGQPEIEVTKKEYGQELAFTAEVDVRPELNLPDPGALKISVDPIEVTDEDVDAELQSLRARFGTLTGVERPVAEGDFVSIDLSATIDGQEVPGATAQGLSHEVGSGRLIEGLDEALIGMSVDESREFTTKLVSGEHAGQDAQVTVTVKSVKERELPEPDDEFAQLASEFDTIDELRANLREQVGRVKRAQQAERIRDAAIDTLLEQVDIPLPEAIVKAQVDSALHGALHSLNHDESKLEEVLAQQGKSREEFENETRTAAETDVKKQLLLDALADKLQVQVGQEDLTERLVATSRQYGIEPQQLLAYLQENNQLPAMFADVRRALAIAEVIRAATVTDTAGNTIDTSEFFGKRPSGDGAADEDADQADESTTADAGE.

Residues 162–243 form the PPIase FKBP-type domain; the sequence is GDFVSIDLSA…VKSVKERELP (82 aa). Positions 431–464 are disordered; the sequence is IDTSEFFGKRPSGDGAADEDADQADESTTADAGE. Residues 446–455 are compositionally biased toward acidic residues; it reads AADEDADQAD.

It belongs to the FKBP-type PPIase family. Tig subfamily.

It is found in the cytoplasm. It catalyses the reaction [protein]-peptidylproline (omega=180) = [protein]-peptidylproline (omega=0). In terms of biological role, involved in protein export. Acts as a chaperone by maintaining the newly synthesized protein in an open conformation. Functions as a peptidyl-prolyl cis-trans isomerase. The sequence is that of Trigger factor from Mycobacterium avium (strain 104).